The sequence spans 114 residues: Small ribosomal subunit protein uS17 (114 aa).

The protein belongs to the universal ribosomal protein uS17 family. In terms of assembly, part of the 30S ribosomal subunit.

Its function is as follows. One of the primary rRNA binding proteins, it binds specifically to the 5'-end of 16S ribosomal RNA. This Aeropyrum pernix (strain ATCC 700893 / DSM 11879 / JCM 9820 / NBRC 100138 / K1) protein is Small ribosomal subunit protein uS17.